Consider the following 374-residue polypeptide: Protein STRICTOSIDINE SYNTHASE-LIKE 10 (374 aa).

An N-terminal signal peptide occupies residues 1–18; sequence MTMMIITVFLTVIAAVLA. An N-linked (GlcNAc...) asparagine glycan is attached at N50.

The protein belongs to the strictosidine synthase family.

It is found in the vacuole. In Arabidopsis thaliana (Mouse-ear cress), this protein is Protein STRICTOSIDINE SYNTHASE-LIKE 10.